A 273-amino-acid chain; its full sequence is MPELPEVETLKNSLESKLIGLVIKKVEFKRDNLRYKLSADLADQIVNTNIINVRRRAKYLIIDFNNNHSLIVHLGMSGRFTLQPNNYEVKKHDHVVFNLSNNEKLIFNDTRRFGMIYSFHTELLEKDFFANLALEPLSDSFELQYLKSKLMNKKVPIKNLLMDNRIVVGVGNIYASESLHLAKIHPDKFGKDLNDDEIKNLIAAVKNVLSKAIIAGGTTLKDFVNGDNKPGYFTQQLMVYARDGQECLSCSSSIIKTKHSGRSTFYCKSCQKA.

Pro-2 functions as the Schiff-base intermediate with DNA in the catalytic mechanism. Glu-3 acts as the Proton donor in catalysis. Catalysis depends on Lys-58, which acts as the Proton donor; for beta-elimination activity. Residues His-92, Arg-111, and Lys-153 each contribute to the DNA site. Residues 238-272 form an FPG-type zinc finger; the sequence is MVYARDGQECLSCSSSIIKTKHSGRSTFYCKSCQK. The Proton donor; for delta-elimination activity role is filled by Arg-262.

This sequence belongs to the FPG family. In terms of assembly, monomer. Zn(2+) serves as cofactor.

It carries out the reaction Hydrolysis of DNA containing ring-opened 7-methylguanine residues, releasing 2,6-diamino-4-hydroxy-5-(N-methyl)formamidopyrimidine.. The enzyme catalyses 2'-deoxyribonucleotide-(2'-deoxyribose 5'-phosphate)-2'-deoxyribonucleotide-DNA = a 3'-end 2'-deoxyribonucleotide-(2,3-dehydro-2,3-deoxyribose 5'-phosphate)-DNA + a 5'-end 5'-phospho-2'-deoxyribonucleoside-DNA + H(+). Its function is as follows. Involved in base excision repair of DNA damaged by oxidation or by mutagenic agents. Acts as a DNA glycosylase that recognizes and removes damaged bases. Has a preference for oxidized purines, such as 7,8-dihydro-8-oxoguanine (8-oxoG). Has AP (apurinic/apyrimidinic) lyase activity and introduces nicks in the DNA strand. Cleaves the DNA backbone by beta-delta elimination to generate a single-strand break at the site of the removed base with both 3'- and 5'-phosphates. The chain is Formamidopyrimidine-DNA glycosylase from Rickettsia bellii (strain OSU 85-389).